The primary structure comprises 921 residues: Protein translocase subunit SecA (921 aa).

Residues glutamine 87, 105–109 (GEGKT), and aspartate 516 contribute to the ATP site. Residues cysteine 905, cysteine 907, cysteine 916, and histidine 917 each coordinate Zn(2+).

The protein belongs to the SecA family. In terms of assembly, monomer and homodimer. Part of the essential Sec protein translocation apparatus which comprises SecA, SecYEG and auxiliary proteins SecDF-YajC and YidC. Requires Zn(2+) as cofactor.

It is found in the cell inner membrane. The protein localises to the cytoplasm. The enzyme catalyses ATP + H2O + cellular proteinSide 1 = ADP + phosphate + cellular proteinSide 2.. Its function is as follows. Part of the Sec protein translocase complex. Interacts with the SecYEG preprotein conducting channel. Has a central role in coupling the hydrolysis of ATP to the transfer of proteins into and across the cell membrane, serving both as a receptor for the preprotein-SecB complex and as an ATP-driven molecular motor driving the stepwise translocation of polypeptide chains across the membrane. The sequence is that of Protein translocase subunit SecA from Albidiferax ferrireducens (strain ATCC BAA-621 / DSM 15236 / T118) (Rhodoferax ferrireducens).